A 336-amino-acid polypeptide reads, in one-letter code: MHWPPEFGKVFMILEDGFSRRFHYLRLSVTEACNFRCTYCLPDGYRPDGRKSFLTVDEIRRVVYGFAELGVKKIRLTGGEPSMRRDLPAIIETVANTAGIEKVAMTTNGYRLKDRAQQWFDAGLRSLNVSIDSLDPRQFQLITGENKLVEILEGLEAAQKAGFRKIKVNTVLLKNLNDHELSQFLFWLKKQPIQLRLIELMQTGEMDARFQKHHQSGLPVKTRLLREGWTQQNRNLTDGPAEVFSHPDYQGQIGLIMPYSKDFCTNCNRLRVSSVGKLHLCLFGEEGVPLRDLLQADEQNSELQSRILEGLTHKRETHFLHDGDSGVTPHLASIGG.

Residues Gly17 to Asp238 enclose the Radical SAM core domain. Arg26 contributes to the GTP binding site. Residues Cys33 and Cys37 each contribute to the [4Fe-4S] cluster site. Residue Tyr39 participates in S-adenosyl-L-methionine binding. Cys40 lines the [4Fe-4S] cluster pocket. Arg75 contributes to the GTP binding site. Residue Gly79 participates in S-adenosyl-L-methionine binding. Thr106 is a binding site for GTP. Position 130 (Ser130) interacts with S-adenosyl-L-methionine. Residue Lys167 participates in GTP binding. S-adenosyl-L-methionine is bound at residue Met201. Positions 264 and 267 each coordinate [4Fe-4S] cluster. Arg269–Arg271 is a binding site for GTP. Cys281 serves as a coordination point for [4Fe-4S] cluster.

It belongs to the radical SAM superfamily. MoaA family. Monomer and homodimer. It depends on [4Fe-4S] cluster as a cofactor.

It catalyses the reaction GTP + AH2 + S-adenosyl-L-methionine = (8S)-3',8-cyclo-7,8-dihydroguanosine 5'-triphosphate + 5'-deoxyadenosine + L-methionine + A + H(+). It functions in the pathway cofactor biosynthesis; molybdopterin biosynthesis. In terms of biological role, catalyzes the cyclization of GTP to (8S)-3',8-cyclo-7,8-dihydroguanosine 5'-triphosphate. The sequence is that of GTP 3',8-cyclase from Tolumonas auensis (strain DSM 9187 / NBRC 110442 / TA 4).